The sequence spans 419 residues: ADIPOR-like receptor IZH3 (419 aa).

Residues 1–65 (MSHPNTHMPR…GEAGGGRSVL (65 aa)) are disordered. Over 1–147 (MSHPNTHMPR…LNAYGWHNET (147 aa)) the chain is Lumenal. The N-linked (GlcNAc...) asparagine glycan is linked to Asn-145. The chain crosses the membrane as a helical span at residues 148 to 168 (INIWSHLVGAAVLAYLLCWGW). At 169 to 184 (PRSDVYRAAQVPRLAK) the chain is on the cytoplasmic side. The chain crosses the membrane as a helical span at residues 185–205 (WAIGAFLACGVKCMASSVAWH). At 206 to 225 (TFNGTCHLKLRSRFVCVDYT) the chain is on the lumenal side. Asn-208 carries an N-linked (GlcNAc...) asparagine glycan. A helical membrane pass occupies residues 226-246 (GITLLVTASVVTTVAVTLYGL). Topologically, residues 247–249 (SRP) are cytoplasmic. Residues 250–270 (LMYAYMVASIGLGTAAGVMNW) form a helical membrane-spanning segment. Topologically, residues 271–283 (SPHFDRPEARPLR) are lumenal. A helical membrane pass occupies residues 284–304 (IAVYVGLAALGLVSFVHVWMQ). At 305 to 311 (VRWASAH) the chain is on the cytoplasmic side. Residues 312–332 (LMAPLVYKSLVWYGIGVVFYA) traverse the membrane as a helical segment. Topologically, residues 333–377 (TLVPERWRSDVTLDCCSGPVHEAACRQFRDLPPVARKDRQFWSLW) are lumenal. A helical membrane pass occupies residues 378 to 398 (WVDYFCHSHFLWHVFVVLGVV). Over 399–419 (GHYRAVLQMSRIVWLDAGRAF) the chain is Cytoplasmic.

The protein belongs to the ADIPOR family.

It localises to the endoplasmic reticulum membrane. In terms of biological role, ADIPOR-like receptor involved in zinc metabolism either by altering membrane sterol content or by directly altering cellular zinc levels. This Eremothecium gossypii (strain ATCC 10895 / CBS 109.51 / FGSC 9923 / NRRL Y-1056) (Yeast) protein is ADIPOR-like receptor IZH3 (IZH3).